The sequence spans 100 residues: C-X-C motif chemokine 3 (100 aa).

Residues 1-31 (MAPPTCRLLSAALVLLLLLATNHQATGAVVA) form the signal peptide. 2 disulfides stabilise this stretch: Cys-36–Cys-62 and Cys-38–Cys-78.

This sequence belongs to the intercrine alpha (chemokine CxC) family.

The protein resides in the secreted. Its function is as follows. Ligand for CXCR2. Has chemotactic activity for neutrophils. May play a role in inflammation and exert its effects on endothelial cells in an autocrine fashion. The sequence is that of C-X-C motif chemokine 3 from Mus musculus (Mouse).